A 543-amino-acid polypeptide reads, in one-letter code: Chaperonin GroEL (543 aa).

ATP-binding positions include 29–32 (TLGP), 86–90 (DGTTT), Gly413, 477–479 (DAL), and Asp493.

This sequence belongs to the chaperonin (HSP60) family. As to quaternary structure, forms a cylinder of 14 subunits composed of two heptameric rings stacked back-to-back. Interacts with the co-chaperonin GroES.

The protein resides in the cytoplasm. It carries out the reaction ATP + H2O + a folded polypeptide = ADP + phosphate + an unfolded polypeptide.. Its function is as follows. Together with its co-chaperonin GroES, plays an essential role in assisting protein folding. The GroEL-GroES system forms a nano-cage that allows encapsulation of the non-native substrate proteins and provides a physical environment optimized to promote and accelerate protein folding. The protein is Chaperonin GroEL of Clostridium botulinum.